The sequence spans 691 residues: Histone-lysine N-methyltransferase Set8 (691 aa).

Residues 1 to 29 (MIMVRRRQRPAKEAASSSSGGASSGSGIP) form a disordered region. Residues 14 to 27 (AASSSSGGASSGSG) show a composition bias toward low complexity. Phosphoserine occurs at positions 195 and 250. T252 is subject to Phosphothreonine. S281 is subject to Phosphoserine. 4 disordered regions span residues 341–363 (TANTESPAGQPRRRKPATPHRIL), 382–401 (GSADPLSPRKSPRKLPTTTA), 407–437 (KSRRRLNQPKPQAPYQPQLQKPPSQQQQQQQ), and 464–516 (AEER…ATNG). At T344 the chain carries Phosphothreonine. S346, S383, S388, and S392 each carry phosphoserine. Polar residues-rich tracts occupy residues 421–430 (YQPQLQKPPS) and 471–481 (NKAPATANSNK). The SET domain occupies 555-676 (DGLQVRHFMG…PGEELTYDYG (122 aa)). Residues 565–567 (KGR), Y610, and 637–638 (NH) each bind S-adenosyl-L-methionine.

The protein belongs to the class V-like SAM-binding methyltransferase superfamily. Histone-lysine methyltransferase family. PR/SET subfamily.

The protein localises to the nucleus. It is found in the chromosome. It catalyses the reaction L-lysyl(20)-[histone H4] + S-adenosyl-L-methionine = N(6)-methyl-L-lysyl(20)-[histone H4] + S-adenosyl-L-homocysteine + H(+). Its function is as follows. Histone methyltransferase that specifically monomethylates 'Lys-20' of histone H4. H4 'Lys-20' monomethylation is enriched during mitosis and represents a specific tag for epigenetic transcriptional repression. Mainly functions in euchromatin regions, thereby playing a central role in the silencing of euchromatic genes. Required for cell proliferation, possibly by contributing to the maintenance of proper higher-order structure of DNA and chromosome condensation during mitosis. The polypeptide is Histone-lysine N-methyltransferase Set8 (Drosophila melanogaster (Fruit fly)).